The primary structure comprises 327 residues: Zinc transport protein ZntB (327 aa).

Over 1–273 (MEAIKGSDVN…ARRTYTMSLM (273 aa)) the chain is Cytoplasmic. Residues 274-294 (AMVFLPSTFLTGLFGVNLGGI) traverse the membrane as a helical segment. The Periplasmic segment spans residues 295 to 300 (PGGGWR). Residues 301–321 (FGFSLFCILLVVLIGGVTLWL) form a helical membrane-spanning segment. Topologically, residues 322 to 327 (HRSKWL) are cytoplasmic.

The protein belongs to the CorA metal ion transporter (MIT) (TC 1.A.35) family.

The protein localises to the cell inner membrane. The enzyme catalyses Zn(2+)(out) + H(+)(out) = Zn(2+)(in) + H(+)(in). Functionally, zinc transporter. Acts as a Zn(2+):proton symporter, which likely mediates zinc ion uptake. The chain is Zinc transport protein ZntB from Salmonella enteritidis PT4 (strain P125109).